The sequence spans 335 residues: uncharacterized protein (335 aa).

This is an uncharacterized protein from Methanocaldococcus jannaschii (strain ATCC 43067 / DSM 2661 / JAL-1 / JCM 10045 / NBRC 100440) (Methanococcus jannaschii).